A 275-amino-acid polypeptide reads, in one-letter code: NH(3)-dependent NAD(+) synthetase (275 aa).

50 to 57 (GISGGVDS) contributes to the ATP binding site. Position 56 (aspartate 56) interacts with Mg(2+). Arginine 147 lines the deamido-NAD(+) pocket. Position 167 (threonine 167) interacts with ATP. Residue glutamate 172 participates in Mg(2+) binding. 2 residues coordinate deamido-NAD(+): lysine 180 and aspartate 187. Residues lysine 196 and threonine 218 each contribute to the ATP site. 267–268 (HK) is a deamido-NAD(+) binding site.

Belongs to the NAD synthetase family. As to quaternary structure, homodimer.

It carries out the reaction deamido-NAD(+) + NH4(+) + ATP = AMP + diphosphate + NAD(+) + H(+). The protein operates within cofactor biosynthesis; NAD(+) biosynthesis; NAD(+) from deamido-NAD(+) (ammonia route): step 1/1. Functionally, catalyzes the ATP-dependent amidation of deamido-NAD to form NAD. Uses ammonia as a nitrogen source. The sequence is that of NH(3)-dependent NAD(+) synthetase from Pseudomonas fluorescens (strain Pf0-1).